The sequence spans 210 residues: UPF0173 protein PYRAB01190 (210 aa).

It belongs to the UPF0173 family.

This is UPF0173 protein PYRAB01190 from Pyrococcus abyssi (strain GE5 / Orsay).